The following is a 369-amino-acid chain: Sulfate permease 2, chloroplastic (369 aa).

The disordered stretch occupies residues 1–21 (MASTTLLQPALGLPSRVGPRS). The N-terminal 82 residues, 1–82 (MASTTLLQPA…QQSRGDLLVS (82 aa)), are a transit peptide targeting the chloroplast. Transmembrane regions (helical) follow at residues 110–130 (VGVA…NVFV), 156–176 (TLML…VAAI), 187–207 (VFLM…TGLM), 229–249 (VVFA…PFVV), and 335–355 (TEAA…TLWI). The 204-residue stretch at 153–356 (LKMTLMLAFV…ALALGTLWIK (204 aa)) folds into the ABC transmembrane type-1 domain.

This sequence belongs to the ATP-binding cassette (ABC) (TC 3.A.1) superfamily. Part of the chloroplast sulfate permease holocomplex. May form a heterodimer with SLUP1.

Its subcellular location is the plastid. The protein resides in the chloroplast membrane. Part of the ABC-type chloroplast envelope-localized sulfate transporter. The chain is Sulfate permease 2, chloroplastic (SULP2) from Chlamydomonas reinhardtii (Chlamydomonas smithii).